The primary structure comprises 329 residues: Beta-ketoacyl-[acyl-carrier-protein] synthase III (329 aa).

Catalysis depends on residues cysteine 113 and histidine 255. The interval 256–260 (QANQR) is ACP-binding. Asparagine 285 is a catalytic residue.

This sequence belongs to the thiolase-like superfamily. FabH family. In terms of assembly, homodimer.

It is found in the cytoplasm. The enzyme catalyses malonyl-[ACP] + acetyl-CoA + H(+) = 3-oxobutanoyl-[ACP] + CO2 + CoA. It participates in lipid metabolism; fatty acid biosynthesis. Its function is as follows. Catalyzes the condensation reaction of fatty acid synthesis by the addition to an acyl acceptor of two carbons from malonyl-ACP. Catalyzes the first condensation reaction which initiates fatty acid synthesis and may therefore play a role in governing the total rate of fatty acid production. Possesses both acetoacetyl-ACP synthase and acetyl transacylase activities. Its substrate specificity determines the biosynthesis of branched-chain and/or straight-chain of fatty acids. The sequence is that of Beta-ketoacyl-[acyl-carrier-protein] synthase III from Chlorobium phaeobacteroides (strain DSM 266 / SMG 266 / 2430).